A 152-amino-acid polypeptide reads, in one-letter code: Vasotocin-neurophysin VT 1 (152 aa).

Positions 1–19 (MSDSFLPTCILCLLALSSA) are cleaved as a signal peptide. Cys20 and Cys25 are oxidised to a cystine. Gly28 is modified (glycine amide). 7 cysteine pairs are disulfide-bonded: Cys40-Cys84, Cys43-Cys57, Cys51-Cys74, Cys58-Cys64, Cys91-Cys103, Cys97-Cys115, and Cys104-Cys109.

Belongs to the vasopressin/oxytocin family.

The protein resides in the secreted. Its function is as follows. Vasotocin is an antidiuretic hormone. The sequence is that of Vasotocin-neurophysin VT 1 from Catostomus commersonii (White sucker).